The following is a 248-amino-acid chain: Small ribosomal subunit protein uS3 (248 aa).

Positions 38–106 constitute a KH type-2 domain; it reads IREYLEKGLD…MVALNILEVK (69 aa). Residues 214-248 are disordered; the sequence is SELNAPAQGRGRGDRNGRPRRGGQRRQRAQQKQEG. A compositionally biased stretch (basic residues) spans 231–242; sequence RPRRGGQRRQRA.

Belongs to the universal ribosomal protein uS3 family. Part of the 30S ribosomal subunit. Forms a tight complex with proteins S10 and S14.

Binds the lower part of the 30S subunit head. Binds mRNA in the 70S ribosome, positioning it for translation. This Corynebacterium aurimucosum (strain ATCC 700975 / DSM 44827 / CIP 107346 / CN-1) (Corynebacterium nigricans) protein is Small ribosomal subunit protein uS3.